We begin with the raw amino-acid sequence, 435 residues long: Mitochondrial association factor 1 form a1 (435 aa).

Residues 1 to 20 (MWRIWRCRLSFLFATGCLLG) form the signal peptide. Residues 21–96 (ALTAGLGSQM…VTARRRRNRR (76 aa)) lie on the Vacuolar side of the membrane. Residues 97-117 (IALIATAVGVAVILAALYVLR) form a helical membrane-spanning segment. Topologically, residues 118-435 (RRRAQPPQEP…ERTYTFPQGD (318 aa)) are cytoplasmic. The segment at 120–159 (RAQPPQEPEPPTRLRTPRPRAPSGQQQPSESEPPAGVPMT) is disordered.

Interacts with host SAMM50.

It is found in the parasitophorous vacuole membrane. Functionally, during host cell infection by tachyzoites, does not play a role in tethering the parasitophorous vacuole to the host mitochondria, probably because it does not bind host mitochondrial import protein TOMM70. This chain is Mitochondrial association factor 1 form a1, found in Toxoplasma gondii (strain ATCC 50611 / Me49).